The primary structure comprises 302 residues: Ornithine carbamoyltransferase (302 aa).

Carbamoyl phosphate is bound by residues Ser52–Thr55, Gln79, Arg103, and His130–Gln133. Residues Asn161, Asp222, and Ser226 to Met227 each bind L-ornithine. Residues Cys262 to Leu263 and Arg290 contribute to the carbamoyl phosphate site.

Belongs to the aspartate/ornithine carbamoyltransferase superfamily. OTCase family.

Its subcellular location is the cytoplasm. It catalyses the reaction carbamoyl phosphate + L-ornithine = L-citrulline + phosphate + H(+). The protein operates within amino-acid biosynthesis; L-arginine biosynthesis; L-arginine from L-ornithine and carbamoyl phosphate: step 1/3. Functionally, reversibly catalyzes the transfer of the carbamoyl group from carbamoyl phosphate (CP) to the N(epsilon) atom of ornithine (ORN) to produce L-citrulline. The chain is Ornithine carbamoyltransferase from Syntrophus aciditrophicus (strain SB).